The primary structure comprises 547 residues: Probable acetolactate synthase (547 aa).

Glutamate 57 is a binding site for thiamine diphosphate. Residues proline 159 and aspartate 299 to aspartate 318 contribute to the FAD site. Residues aspartate 388–isoleucine 468 are thiamine pyrophosphate binding. 2 residues coordinate Mg(2+): aspartate 439 and asparagine 466.

This sequence belongs to the TPP enzyme family. Mg(2+) is required as a cofactor. Requires thiamine diphosphate as cofactor.

The catalysed reaction is 2 pyruvate + H(+) = (2S)-2-acetolactate + CO2. Its pathway is amino-acid biosynthesis; L-isoleucine biosynthesis; L-isoleucine from 2-oxobutanoate: step 1/4. It participates in amino-acid biosynthesis; L-valine biosynthesis; L-valine from pyruvate: step 1/4. The protein is Probable acetolactate synthase (ilvG) of Mycobacterium bovis (strain ATCC BAA-935 / AF2122/97).